The primary structure comprises 395 residues: Acetate kinase (395 aa).

Asparagine 7 is a binding site for Mg(2+). Residue lysine 14 coordinates ATP. Arginine 88 lines the substrate pocket. Catalysis depends on aspartate 145, which acts as the Proton donor/acceptor. ATP is bound by residues 205–209, 279–281, and 327–331; these read HLGNG, DFR, and GIGEN. Glutamate 381 contacts Mg(2+).

This sequence belongs to the acetokinase family. As to quaternary structure, homodimer. It depends on Mg(2+) as a cofactor. The cofactor is Mn(2+).

The protein localises to the cytoplasm. It carries out the reaction acetate + ATP = acetyl phosphate + ADP. It functions in the pathway metabolic intermediate biosynthesis; acetyl-CoA biosynthesis; acetyl-CoA from acetate: step 1/2. Its function is as follows. Catalyzes the formation of acetyl phosphate from acetate and ATP. Can also catalyze the reverse reaction. In Campylobacter jejuni subsp. jejuni serotype O:6 (strain 81116 / NCTC 11828), this protein is Acetate kinase.